A 403-amino-acid polypeptide reads, in one-letter code: Neuromedin U receptor homolog nmur-2 (403 aa).

The Extracellular segment spans residues 1-27 (MSQCTVEYNVSEITEYVLSTLGERCQS). The chain crosses the membrane as a helical span at residues 28 to 48 (AGIVIPTVIIYGTIFLLGLFG). At 49 to 68 (NICTCIVIAANKSMHNPTNY) the chain is on the cytoplasmic side. Residues 69–89 (YLFSLAVSDIIALILGLPMEF) traverse the membrane as a helical segment. The Extracellular segment spans residues 90-109 (YQSLDYSYPYRFSEGICKAR). Residues 110–130 (AFLIEFTSYASIMIICCFSFE) traverse the membrane as a helical segment. Over 131–151 (RWLAICHPLRSKIFSTLWRAN) the chain is Cytoplasmic. A helical membrane pass occupies residues 152-172 (VLIILAWTISFVCALPIAFIV). At 173-216 (QINKLPLPEDAKYQPWTNKVSTDGIFVLHTEFCAMNQSRPDQQK) the chain is on the extracellular side. The helical transmembrane segment at 217 to 237 (MIIIFAFTVFFVIPAIAIVIM) threads the bilayer. Topologically, residues 238–268 (YAHIAVQLESSEIDLKGDKMVKKRRNKSNRT) are cytoplasmic. A helical membrane pass occupies residues 269–289 (VLKMLLSVVITFFICWLPFHI). The Extracellular segment spans residues 290–304 (QRLLSVYTTWSETTT). Residues 305 to 325 (ISPPVQFLSMIVFYISGFCYY) form a helical membrane-spanning segment. Topologically, residues 326–403 (SNSAANPILY…PHRKLEVHNY (78 aa)) are cytoplasmic.

It belongs to the G-protein coupled receptor 1 family.

It is found in the membrane. Its function is as follows. Putative G protein-coupled receptor for pyrokinin-like neuropeptide derived from the processing of the neuropeptide precursor capa-1. This chain is Neuromedin U receptor homolog nmur-2, found in Caenorhabditis elegans.